The sequence spans 350 residues: Cilia- and flagella-associated protein 36 (350 aa).

Residues 142 to 167 adopt a coiled-coil conformation; sequence SELEQQEMKILQEVLRRSKEEYDLQM. 2 disordered regions span residues 171–233 and 301–337; these read GLGS…ATTA and RQTGKGLTDTAAAAAPEPKPATQEISVEEKKKLQKRK. Polar residues predominate over residues 177–220; it reads LASTSSSVSETPQNPEQRLSNGVSDPLTLTQPDSEMEESSTATQ. Positions 280-350 form a coiled coil; sequence VALQQRSEYL…EKLKEEVIKK (71 aa).

The protein belongs to the CFAP36 family.

It localises to the nucleus. Its subcellular location is the cytoplasm. It is found in the cell projection. The protein localises to the cilium. The protein resides in the flagellum. The sequence is that of Cilia- and flagella-associated protein 36 from Danio rerio (Zebrafish).